We begin with the raw amino-acid sequence, 102 residues long: uncharacterized protein (102 aa).

This is an uncharacterized protein from Saccharomyces cerevisiae (strain ATCC 204508 / S288c) (Baker's yeast).